The primary structure comprises 540 residues: 2-isopropylmalate synthase (540 aa).

The 266-residue stretch at 8–273 (VLIFDTTLRD…FFGRDEDSPT (266 aa)) folds into the Pyruvate carboxyltransferase domain. Residues Asp17, His208, His210, and Asn244 each coordinate Mn(2+). The regulatory domain stretch occupies residues 408 to 540 (QLKLVQVSCG…MAQLDSSPVH (133 aa)).

This sequence belongs to the alpha-IPM synthase/homocitrate synthase family. LeuA type 1 subfamily. As to quaternary structure, homodimer. It depends on Mn(2+) as a cofactor.

The protein localises to the cytoplasm. The enzyme catalyses 3-methyl-2-oxobutanoate + acetyl-CoA + H2O = (2S)-2-isopropylmalate + CoA + H(+). The protein operates within amino-acid biosynthesis; L-leucine biosynthesis; L-leucine from 3-methyl-2-oxobutanoate: step 1/4. Functionally, catalyzes the condensation of the acetyl group of acetyl-CoA with 3-methyl-2-oxobutanoate (2-ketoisovalerate) to form 3-carboxy-3-hydroxy-4-methylpentanoate (2-isopropylmalate). The protein is 2-isopropylmalate synthase of Synechococcus sp. (strain CC9311).